The primary structure comprises 730 residues: Guanyl-specific ribonuclease pgl-1 (730 aa).

Positions K205–K447 are involved in dimerization. Residue H437 is the Proton acceptor of the active site. Composition is skewed to polar residues over residues D452 to A472 and D568 to K595. Disordered regions lie at residues D452 to K475, S567 to P639, and G686 to F730. Residues G674 to F730 are RNA-binding RGG-box.

In terms of assembly, homodimer. Interacts with pgl-2 and pgl-3; this association is not required for P-granule localization of either pgl-2 or pgl-3. Interacts with ife-1. Interacts with prmt-1; the interaction is direct. Interacts with nmad-1. Interacts with P granule components meg-1, meg-3 and meg-4. Requires Does not require metal ions for catalytic activity. as cofactor. Post-translationally, methylated at arginine residues in the RNA-binding RGG-box by prmt-1. Methylation promotes P-granule degradation by autophagy. Expressed in the germline. Expressed in most somatic cells.

It localises to the cytoplasmic granule. The catalysed reaction is [RNA] containing guanosine + H2O = an [RNA fragment]-3'-guanosine-3'-phosphate + a 5'-hydroxy-ribonucleotide-3'-[RNA fragment].. Its activity is regulated as follows. Not inhibited by RNase inhibitor RNasin. Functionally, guanyl-specific endoribonuclease which cleaves the phosphodiester bond in single-stranded RNA between the 3'-guanylic residue and the 5'-OH residue of adjacent nucleotide, resulting in the formation of a corresponding 2',3'-cyclic phosphate intermediate. Together with the P-granule component pgl-3, is involved in the formation of P-granules. Together with pgl-3, probably recruits other granule components such as pos-1, mex-3 and glh-1 to P-granules. In addition, may act redundantly with pgl-3 to protect germ cells from excessive germline apoptosis during normal oogenesis and development of the two gonadal arms. This may in part be through regulating the localization of sir-2.1 which is involved in germ cell apoptosis. May protect somatic cells from excessive apoptosis during normal development. Essential role in male and female postembryonic germline development; maternally provided protein maintains a population of proliferating germ cells and zygotic expression is required for correct oogenesis. The protein is Guanyl-specific ribonuclease pgl-1 of Caenorhabditis elegans.